The primary structure comprises 314 residues: DNA-directed RNA polymerase subunit alpha (314 aa).

Residues 1–227 are alpha N-terminal domain (alpha-NTD); sequence MIEFQKPTIS…EHLALFIDLS (227 aa). Residues 241–314 form an alpha C-terminal domain (alpha-CTD) region; that stretch reads VETVMENKEP…GQSFKQETEN (74 aa).

The protein belongs to the RNA polymerase alpha chain family. Homodimer. The RNAP catalytic core consists of 2 alpha, 1 beta, 1 beta' and 1 omega subunit. When a sigma factor is associated with the core the holoenzyme is formed, which can initiate transcription.

The enzyme catalyses RNA(n) + a ribonucleoside 5'-triphosphate = RNA(n+1) + diphosphate. Functionally, DNA-dependent RNA polymerase catalyzes the transcription of DNA into RNA using the four ribonucleoside triphosphates as substrates. The chain is DNA-directed RNA polymerase subunit alpha from Oenococcus oeni (strain ATCC BAA-331 / PSU-1).